The primary structure comprises 1155 residues: MEADWDELSRIQVPPPSPHGMPTIATAIAFDDVMELLWVGNEYGRITSFCGPELQRYTSVRAHPVSEGPVRQILFHDRGVISLSSKSVHMITRRGLTQWHITHEDMTDLRCMSFTAQLNKVIVAGCQKAMFTIDIDKGHIVDKLPTEYNYTMMKKSRYLCAATDTGSVNALSLTDFRVVKSWKAHGTAVNDMDARNDLLVTCGFSVRHLGSPIVDPLANVYDLKTLSPLPPIPFHAGAAYVRMHPKLHTTSFVASQTGQLQVVDLMNPNAINLRQANVSFMLGIDLSPSGEALAINDAECAIHLWGSPSKVHFNEMSKEVEFADVPARPPPLDWSPDTPLSMIGMPYYHERLFSAWPSHLVFEIGSPPAPIDQALIPYLRPAEIGHYAPNPKKTRRNQVENTRALANSEPALIAPKFLSEKAREQSKAKSDGLVTDAAETLAGTKLNGEAEDDPLLKYSNVEIKYSRFGVDDFDFRFYNQTKFSGLETHIANSFTNALLQLFKFIPLIRNVALQHAASACIFENCLLCEMGYLFDMLEKADGQNCQATNLLKTFGSFREASSLGLLEENLTNKSLSTSIQSVNRFFLGQISHDFRMILPSSDDLDHKLATVASESIRCMFCQKEIVRPGNSLVNELIYPAIDIKQIRRNPAYRFSNILRASIERETQNRGWCNYCRRYQQVAIRKTVHRMPLVMMLNTALNNPIYRRLWAIPGWLPEAVGLVVDAGQILCFEGEDLRMRMQNNMPGLVVYELVGVVSEIDIPEHQKAHLVSFINVSISSREPETTNKWHLFNDFLVTEVDKDEALRFNQPWKVPCVLAYQVKDARHAMDDNWKNVLDTTLLYRDWSLNGGRSVESLATLSEEEKPTPGTPVALDTEFVDLEKAEIDVKADGSQEIVRPSKSGLARVSVLRGSGTREGVPFIDDYITIKETIVDYVTQYSGIKPGDLDPRTSQHNLVPLKVAYKKLWLLLNLGCVFVGHGLASDFRKINIQVPKCQTVDTQYLFFHPGKNRRLSLRYLAWAVFKEYIQEEPTDNNQGHDSIEDARMALRLWKKFQEYEDAGVVSQILEELFREGSKLGFRPPARNGATAVLSRPGTAVTMQNNSGRNTPSTPEVTAPTASAPTTPRQGFRRSVALTPSNGSFAPGTGDFFGGSPLK.

WD repeat units lie at residues 102 to 145 and 276 to 315; these read THED…DKLP and ANVSFMLGIDLSPSGEALAINDAECAIHLWGSPSKVHFNE. The interval 316 to 452 is linker; sequence MSKEVEFADV…GTKLNGEAED (137 aa). In terms of domain architecture, USP spans 453–822; sequence DPLLKYSNVE…VPCVLAYQVK (370 aa). Positions 871-1049 constitute an Exonuclease domain; it reads VALDTEFVDL…IEDARMALRL (179 aa). Residues Asp874, Glu876, Asp983, and Asp1042 each contribute to the a divalent metal cation site. Residues 1095 to 1155 are disordered; sequence TAVTMQNNSG…GDFFGGSPLK (61 aa). Polar residues predominate over residues 1097–1106; it reads VTMQNNSGRN. The segment covering 1107 to 1124 has biased composition (low complexity); sequence TPSTPEVTAPTASAPTTP.

The protein belongs to the peptidase C19 family. PAN2 subfamily. In terms of assembly, forms a heterotrimer with an asymmetric homodimer of the regulatory subunit pan3 to form the poly(A)-nuclease (PAN) deadenylation complex. Requires a divalent metal cation as cofactor.

It is found in the cytoplasm. The enzyme catalyses Exonucleolytic cleavage of poly(A) to 5'-AMP.. Its activity is regulated as follows. Positively regulated by the regulatory subunit pan3. Catalytic subunit of the poly(A)-nuclease (PAN) deadenylation complex, one of two cytoplasmic mRNA deadenylases involved in mRNA turnover. PAN specifically shortens poly(A) tails of RNA and the activity is stimulated by poly(A)-binding protein pab1. PAN deadenylation is followed by rapid degradation of the shortened mRNA tails by the CCR4-NOT complex. Deadenylated mRNAs are then degraded by two alternative mechanisms, namely exosome-mediated 3'-5' exonucleolytic degradation, or deadenylation-dependent mRNA decaping and subsequent 5'-3' exonucleolytic degradation by xrn1. May also be involved in post-transcriptional maturation of mRNA poly(A) tails. The sequence is that of PAN2-PAN3 deadenylation complex catalytic subunit pan2 from Aspergillus oryzae (strain ATCC 42149 / RIB 40) (Yellow koji mold).